A 280-amino-acid chain; its full sequence is Pantothenate synthetase (280 aa).

30 to 37 is a binding site for ATP; that stretch reads MGYLHEGH. His37 (proton donor) is an active-site residue. Gln61 serves as a coordination point for (R)-pantoate. Residue Gln61 coordinates beta-alanine. Position 147 to 150 (147 to 150) interacts with ATP; sequence GKKD. Position 153 (Gln153) interacts with (R)-pantoate. ATP is bound by residues Val176 and 184–187; that span reads MSSR.

This sequence belongs to the pantothenate synthetase family. Homodimer.

It is found in the cytoplasm. The catalysed reaction is (R)-pantoate + beta-alanine + ATP = (R)-pantothenate + AMP + diphosphate + H(+). It functions in the pathway cofactor biosynthesis; (R)-pantothenate biosynthesis; (R)-pantothenate from (R)-pantoate and beta-alanine: step 1/1. Its function is as follows. Catalyzes the condensation of pantoate with beta-alanine in an ATP-dependent reaction via a pantoyl-adenylate intermediate. This chain is Pantothenate synthetase, found in Sulfurihydrogenibium sp. (strain YO3AOP1).